The following is a 684-amino-acid chain: Ski-like protein (684 aa).

Residues lysine 50 and lysine 70 each participate in a glycyl lysine isopeptide (Lys-Gly) (interchain with G-Cter in SUMO2) cross-link. The disordered stretch occupies residues 420–454 (SQSKELTKTEASKSISRQSEKAHSSGKLQKTVSYP). Serine 452 carries the phosphoserine modification. Glycyl lysine isopeptide (Lys-Gly) (interchain with G-Cter in SUMO2) cross-links involve residues lysine 489 and lysine 527. Positions 536-684 (RTYLKQQEKL…ILKSSKTAKE (149 aa)) form a coiled coil.

It belongs to the SKI family. As to quaternary structure, interacts with CPNE4 (via VWFA domain). Interacts with SMAD2, SMAD3 and RNF111. Isoform 1 interacts with WWP1. In terms of processing, ubiquitinated by RNF111 and ARK2C, promoting proteasomal degradation, leading to enhance the BMP-Smad signaling. As to expression, isoform SNON and isoform SNOA are widely expressed. Highest expression is found in skeletal muscle, followed by placenta and lung. Lowest expression in heart, brain and pancreas. Isoform SNOI expression is restricted to skeletal muscle.

Its function is as follows. May have regulatory role in cell division or differentiation in response to extracellular signals. The chain is Ski-like protein (SKIL) from Homo sapiens (Human).